Consider the following 342-residue polypeptide: Ribosomal RNA small subunit methyltransferase C (342 aa).

The protein belongs to the methyltransferase superfamily. RsmC family. As to quaternary structure, monomer.

It is found in the cytoplasm. It carries out the reaction guanosine(1207) in 16S rRNA + S-adenosyl-L-methionine = N(2)-methylguanosine(1207) in 16S rRNA + S-adenosyl-L-homocysteine + H(+). Functionally, specifically methylates the guanine in position 1207 of 16S rRNA in the 30S particle. The protein is Ribosomal RNA small subunit methyltransferase C of Salmonella enteritidis PT4 (strain P125109).